The primary structure comprises 788 residues: Cell division cycle protein 27 homolog (788 aa).

Positions 198 to 436 are disordered; that stretch reads YLDSPASSLK…PLPSVASSLN (239 aa). Residues 217–229 show a composition bias toward low complexity; sequence GPSSSSAASTAEP. Polar residues-rich tracts occupy residues 241 to 273, 293 to 303, and 319 to 360; these read RGTIASANRETRNTTSNITPRQSTPGSTPSRIN, SSVTGSRSSLF, and NRAN…NPVR. A compositionally biased stretch (low complexity) spans 366 to 378; sequence ADAAAAANKTAKT. Over residues 391–414 the composition is skewed to polar residues; that stretch reads VSRNSNLARSLSGSTNSVASTASE. TPR repeat units follow at residues 561–594, 596–628, 629–662, 664–696, and 731–764; these read PQSWCAAGNCFSLQRQHTQAIECMERAIQLDKRF, YAYTLLGHELIVQDELDKAAGSFRSALLLSPRD, YRAWYGLGLVHLKKEQNLTALTNIQKAVNINPTN, AMLCTLSQIEQQRGQIDTALVLIDRALTLNPLD, and AFIFHLLARVHRRMGNTHLALLNYSWAAELDPRG.

This sequence belongs to the APC3/CDC27 family. In terms of assembly, the APC/C complex is probably composed of at least 12 subunits: apc-2, apc-10, apc-11, cdc-26, emb-1, emb-27, emb-30, mat-1, mat-2, mat-3, such-1 and gfi-3. In terms of tissue distribution, expressed in the ventral nerve cord.

The protein resides in the nucleus. It functions in the pathway protein modification; protein ubiquitination. Probable component of the anaphase promoting complex/cyclosome (APC/C), a cell cycle-regulated E3 ubiquitin ligase that controls progression through mitosis and the G1 phase of the cell cycle. The APC/C complex acts by mediating ubiquitination and subsequent degradation of target proteins. Developmental role in early embryogenesis and the metaphase to anaphase transition in oocyte and spermatocyte meiosis and mitosis in germ cells. Required for embryonic anterior-posterior axis formation. Plays a role in regulating the abundance of glr-1 receptors in postmitotic neurons, which may in turn control animal locomotion. This Caenorhabditis elegans protein is Cell division cycle protein 27 homolog.